Consider the following 423-residue polypeptide: Serine incorporator 5 (423 aa).

Residues 1–36 are Extracellular-facing; the sequence is MSAQCCAGQLACCCGSAGCSLCCDCCPRIRQSLSTR. Residues 37-57 form a helical membrane-spanning segment; it reads FMYALYFILVVVLCCIMMSTT. Residues 58 to 89 are Cytoplasmic-facing; the sequence is VAHKMKEHIPFFEDMCKGIKAGDTCEKLVGYS. The helical transmembrane segment at 90–110 threads the bilayer; the sequence is AVYRVCFGMACFFFIFCLLTL. Residues 111–124 are Extracellular-facing; the sequence is KINNSKSCRAHIHN. Residue Asn113 is glycosylated (N-linked (GlcNAc...) asparagine). Residues 125–145 form a helical membrane-spanning segment; sequence GFWFFKLLLLGAMCSGAFFIP. Residues 146 to 156 lie on the Cytoplasmic side of the membrane; the sequence is DQDTFLNAWRY. A helical transmembrane segment spans residues 157–177; sequence VGAVGGFLFIGIQLLLLVEFA. Residues 178–198 are Extracellular-facing; it reads HKWNKNWTAGTASNKLWYASL. An N-linked (GlcNAc...) asparagine glycan is attached at Asn183. Residues 199–219 form a helical membrane-spanning segment; sequence ALVTLIMYSIATGGLVLMAVF. The Cytoplasmic portion of the chain corresponds to 220–230; sequence YTQKDSCMENK. A helical transmembrane segment spans residues 231-251; sequence ILLGVNGGLCLLISLVAISPW. Residues 252 to 258 are Extracellular-facing; the sequence is VQNRQPH. A helical transmembrane segment spans residues 259–279; the sequence is SGLLQSGVISCYVTYLTFSAL. Over 280 to 311 the chain is Cytoplasmic; sequence SSKPAEVVLDEHGKNVTICVPDFGQDLYRDEN. The chain crosses the membrane as a helical span at residues 312-332; the sequence is LVTILGTSLLIGCILYSCLTS. The Extracellular segment spans residues 333–385; the sequence is TTRSSSDALQGRYAAPELEIARCCFCFSPGGEDTEEQQPGKEGPRVIYDEKKG. A helical transmembrane segment spans residues 386 to 406; the sequence is TVYIYSYFHFVFFLASLYVMM. Over 407–423 the chain is Cytoplasmic; the sequence is TVTNWFNHVRSAFHLLP.

It belongs to the TDE1 family. Highly expressed in placenta, skeletal muscle, spleen, thymus, testis and peripheral leukocyte and is expressed weakly in the heart, liver and fetal brain.

The protein localises to the cell membrane. The protein resides in the cytoplasm. It localises to the perinuclear region. The enzyme catalyses a 1,2-diacyl-sn-glycero-3-phospho-L-serine(in) = a 1,2-diacyl-sn-glycero-3-phospho-L-serine(out). It carries out the reaction a 1,2-diacyl-sn-glycero-3-phosphocholine(in) = a 1,2-diacyl-sn-glycero-3-phosphocholine(out). The catalysed reaction is a 1,2-diacyl-sn-glycero-3-phosphoethanolamine(in) = a 1,2-diacyl-sn-glycero-3-phosphoethanolamine(out). In terms of biological role, restriction factor required to restrict infectivity of lentiviruses, such as HIV-1: acts by inhibiting an early step of viral infection. Impairs the penetration of the viral particle into the cytoplasm. Non-ATP-dependent, non-specific lipid transporter for phosphatidylserine, phosphatidylcholine, and phosphatidylethanolamine. Functions as a scramblase that flips lipids in both directions across the membrane. Phospholipid scrambling results in HIV-1 surface exposure of phosphatidylserine and loss of membrane asymmetry, which leads to changes in HIV-1 Env conformation and loss of infectivity. Enhances the incorporation of serine into phosphatidylserine and sphingolipids. May play a role in providing serine molecules for the formation of myelin glycosphingolipids in oligodendrocytes. The protein is Serine incorporator 5 of Homo sapiens (Human).